Here is an 86-residue protein sequence, read N- to C-terminus: Toxin ICK-18 (86 aa).

The N-terminal stretch at 1–19 is a signal peptide; the sequence is MKTIFALVFCCAIAVVVLG. Disulfide bonds link Cys35-Cys49, Cys42-Cys61, Cys48-Cys76, and Cys79-Cys86.

This sequence belongs to the neurotoxin 21 family. As to expression, expressed by the venom gland.

It localises to the secreted. Probable neurotoxin with ion channel impairing activity. The polypeptide is Toxin ICK-18 (Trittame loki (Brush-footed trapdoor spider)).